The following is a 144-amino-acid chain: UPF0102 protein sce2912 (144 aa).

Belongs to the UPF0102 family.

This is UPF0102 protein sce2912 from Sorangium cellulosum (strain So ce56) (Polyangium cellulosum (strain So ce56)).